Reading from the N-terminus, the 342-residue chain is Cyclin-D3-1 (342 aa).

The span at 322-334 shows a compositional bias: polar residues; that stretch reads VGSPATNYESSAS. The interval 322–342 is disordered; that stretch reads VGSPATNYESSASSKRRRICR.

It belongs to the cyclin family. Cyclin D subfamily.

This Oryza sativa subsp. japonica (Rice) protein is Cyclin-D3-1 (CYCD3-1).